Consider the following 601-residue polypeptide: Serine/threonine-protein phosphatase 2A 65 kDa regulatory subunit A beta isoform (601 aa).

Ala2 is modified (N-acetylalanine). 15 HEAT repeats span residues 20 to 58 (DSLY…GVER), 59 to 96 (TRTE…GGPD), 97 to 135 (FAHC…TPVA), 136 to 173 (LEAH…ASNA), 174 to 212 (VKAE…ELDS), 213 to 251 (VKTE…SQED), 252 to 290 (LEAL…GPKI), 291 to 333 (ALSD…RETV), 334 to 372 (IMNQ…GKEN), 373 to 411 (TIEH…GIRQ), 412 to 450 (LSQS…GVEF), 451 to 489 (FDEK…GTEW), 490 to 528 (AQNT…GKEI), 529 to 567 (TTKQ…DTNA), and 568 to 601 (LQGE…LALA).

It belongs to the phosphatase 2A regulatory subunit A family. PP2A consists of a common heterodimeric core enzyme, composed of a 36 kDa catalytic subunit (subunit C) and a 65 kDa constant regulatory subunit (PR65 or subunit A), that associates with a variety of regulatory subunits. Proteins that associate with the core dimer include three families of regulatory subunits B (the R2/B/PR55/B55, R3/B''/PR72/PR130/PR59 and R5/B'/B56 families), the 48 kDa variable regulatory subunit, viral proteins, and cell signaling molecules. Interacts with IPO9. Interacts with SGO1. Interacts with RAF1.

Functionally, the PR65 subunit of protein phosphatase 2A serves as a scaffolding molecule to coordinate the assembly of the catalytic subunit and a variable regulatory B subunit. The polypeptide is Serine/threonine-protein phosphatase 2A 65 kDa regulatory subunit A beta isoform (Ppp2r1b) (Mus musculus (Mouse)).